The primary structure comprises 669 residues: Soluble guanylate cyclase 89Db (669 aa).

Heme is bound at residue His104. Positions 430–458 form a coiled coil; it reads QHCSKLEIMFEKEEQRSDELEKSLELADS. The region spanning 494–620 is the Guanylate cyclase domain; sequence SVIFIEVMNI…DTVNTASRME (127 aa).

This sequence belongs to the adenylyl cyclase class-4/guanylyl cyclase family. Heterodimer; with Gyc88E, in the presence of magnesium or manganese. It depends on heme as a cofactor. Expressed in embryos in a segmental pattern in the ventral nerve cord (VNC) and in the brain, beginning at stage 13 and continuing through to stage 17. Colocalized with Gyc-89Db in several peripheral neurons that innervate trachea, basiconical sensilla and the sensory cones in the posterior segments of the embryo. Expression in wandering 3rd instar larvae is most prominent in a small cluster of cells located in the anterior medial region of each brain lobe. In the VNC, expression is found in scattered cells both laterally and at the midline.

The protein resides in the cytoplasm. The enzyme catalyses GTP = 3',5'-cyclic GMP + diphosphate. Probably not activated by nitric oxide (NO). Heterodimer exhibits some stimulation, compounds (SIN-1 and two of the NONOates) that were ineffective at stimulating Gyc-88E homodimer did stimulate the heterodimer. In terms of biological role, heterodimers with Gyc88E are activated in response to changing oxygen concentrations, alerting flies to hypoxic environments. Under normal oxygen concentrations, oxygen binds to the heme group and results in low levels of guanylyl cyclase activity. When exposed to reduced oxygen concentrations, the oxygen dissociates from the heme group resulting in activation of the enzyme. This Drosophila melanogaster (Fruit fly) protein is Soluble guanylate cyclase 89Db.